The following is a 333-amino-acid chain: Atrochrysone carboxyl ACP thioesterase (333 aa).

His-104, His-106, Asp-108, and His-109 together coordinate Zn(2+). The active-site Proton donor/acceptor is the Asp-108.

Belongs to the metallo-beta-lactamase superfamily. Requires Zn(2+) as cofactor.

The catalysed reaction is atrochrysone carboxyl-[ACP] + H2O = atrochrysone carboxylate + holo-[ACP] + H(+). It participates in pigment biosynthesis. Atrochrysone carboxyl ACP thioesterase; part of the gene cluster that mediates the biosynthesis of the bianthraquinone cladofulvin, a conidial pigment not required for virulence but that plays a role in fitness and resistance to environmental stresses including UV light and low-temperature stress. The pathway begins with the synthesis of atrochrysone thioester by the polyketide synthase (PKS) claG. The atrochrysone carboxyl ACP thioesterase claF then breaks the thioester bond and releases the atrochrysone carboxylic acid from claG. This compound is decarboxylated by claH to yield emodin, which is further converted to chrysophanol hydroquinone by the reductase claC and the dehydratase claB. The cytochrome P450 monooxygenase claM then catalyzes the dimerization of nataloe-emodin to cladofulvin. The sequence is that of Atrochrysone carboxyl ACP thioesterase from Passalora fulva (Tomato leaf mold).